A 153-amino-acid chain; its full sequence is MATTGTAAVATGTSTVKRKPVFVKVEQLKPGTTGHTLTVKVIEANIVVPVTRKTRPASSLSRPSQPSRIVECLIGDETGCILFTARNDQVDLMKPGATVILRNSRIDMFKGTMRLGVDKWGRIEATGAASFTVKEDNNLSLVEYELINVGGDQ.

A2 bears the N-acetylalanine mark.

This is an uncharacterized protein from Arabidopsis thaliana (Mouse-ear cress).